We begin with the raw amino-acid sequence, 181 residues long: Calmodulin-like protein 6 (181 aa).

4 consecutive EF-hand domains span residues 33–68, 69–104, 107–142, and 143–178; these read EQIK…LGIN, PTKS…YHEK, NQES…AGEP, and LNEV…ESFK. Asp156, Asp158, Asp160, Thr162, and Glu167 together coordinate Ca(2+).

It belongs to the calmodulin family. Calglandulin subfamily. In terms of tissue distribution, expressed in prostate, thymus, heart, skeleton muscle, bone marrow and ovary.

It is found in the cytoplasm. The protein localises to the nucleus. This Homo sapiens (Human) protein is Calmodulin-like protein 6 (CALML6).